Reading from the N-terminus, the 397-residue chain is 2-isopropylmalate synthase 1 (397 aa).

The Pyruvate carboxyltransferase domain occupies 6 to 268 (VIVFDTTLRD…VHGINTKEIY (263 aa)). Mn(2+) is bound by residues D15, H203, H205, and N239.

It belongs to the alpha-IPM synthase/homocitrate synthase family. LeuA type 1 subfamily. As to quaternary structure, homodimer. Mn(2+) serves as cofactor.

Its subcellular location is the cytoplasm. The enzyme catalyses 3-methyl-2-oxobutanoate + acetyl-CoA + H2O = (2S)-2-isopropylmalate + CoA + H(+). Its pathway is amino-acid biosynthesis; L-leucine biosynthesis; L-leucine from 3-methyl-2-oxobutanoate: step 1/4. Functionally, catalyzes the condensation of the acetyl group of acetyl-CoA with 3-methyl-2-oxobutanoate (2-ketoisovalerate) to form 3-carboxy-3-hydroxy-4-methylpentanoate (2-isopropylmalate). The protein is 2-isopropylmalate synthase 1 of Caldanaerobacter subterraneus subsp. tengcongensis (strain DSM 15242 / JCM 11007 / NBRC 100824 / MB4) (Thermoanaerobacter tengcongensis).